Reading from the N-terminus, the 468-residue chain is UDP-N-acetylmuramoyl-L-alanine--L-glutamate ligase (468 aa).

Residue 122 to 128 coordinates ATP; it reads GTKGKST.

The protein belongs to the MurCDEF family. MurD2 subfamily.

The protein resides in the cytoplasm. The catalysed reaction is UDP-N-acetyl-alpha-D-muramoyl-L-alanine + L-glutamate + ATP = UDP-N-acetyl-alpha-D-muramoyl-L-alanyl-L-glutamate + ADP + phosphate + H(+). It participates in cell wall biogenesis; peptidoglycan biosynthesis. Functionally, cell wall formation. Catalyzes the addition of L-glutamate to the nucleotide precursor UDP-N-acetylmuramoyl-L-alanine. This chain is UDP-N-acetylmuramoyl-L-alanine--L-glutamate ligase, found in Xanthomonas euvesicatoria pv. vesicatoria (strain 85-10) (Xanthomonas campestris pv. vesicatoria).